Reading from the N-terminus, the 277-residue chain is MAIKKYKPITNGRRNMTSLDFAEITKTTPEKSLLKPLPKKAGRNNQGKLTVRHHGGGHKRQYRVIDFKRNKDGINAKVDSIQYDPNRSANIALVVYADGEKRYIIAPKGLEVGQIVESGAEADIKVGNALPLQNIPVGTVVHNIELKPGKGGQIARSAGASAQVLGKEGKYVLIRLRSGEVRMILSTCRATIGQVGNLQHELVNVGKAGRSRWKGIRPTVRGSVMNPNDHPHGGGEGRAPIGRPSPMSPWGKPTLGKKTRRGKKSSDKLIVRGRKKK.

Disordered regions lie at residues 36–55 (PLPK…RHHG) and 213–277 (WKGI…RKKK).

Belongs to the universal ribosomal protein uL2 family. In terms of assembly, part of the 50S ribosomal subunit. Forms a bridge to the 30S subunit in the 70S ribosome.

In terms of biological role, one of the primary rRNA binding proteins. Required for association of the 30S and 50S subunits to form the 70S ribosome, for tRNA binding and peptide bond formation. It has been suggested to have peptidyltransferase activity; this is somewhat controversial. Makes several contacts with the 16S rRNA in the 70S ribosome. The protein is Large ribosomal subunit protein uL2 of Staphylococcus aureus (strain bovine RF122 / ET3-1).